A 214-amino-acid chain; its full sequence is UPF0725 protein At1g19565 (214 aa).

The segment at 56 to 92 is disordered; that stretch reads EEEYEPSLPSSESPTDSCHADHESPDSPKYQQPAPGE.

It belongs to the UPF0725 (EMB2204) family.

In Arabidopsis thaliana (Mouse-ear cress), this protein is UPF0725 protein At1g19565.